Reading from the N-terminus, the 461-residue chain is Adenosylmethionine-8-amino-7-oxononanoate aminotransferase (461 aa).

117-118 (GA) lines the pyridoxal 5'-phosphate pocket. Position 150 (Y150) interacts with substrate. Pyridoxal 5'-phosphate is bound at residue D263. 3 residues coordinate substrate: K296, G331, and R426. K296 bears the N6-(pyridoxal phosphate)lysine mark.

Belongs to the class-III pyridoxal-phosphate-dependent aminotransferase family. BioA subfamily. In terms of assembly, homodimer. Pyridoxal 5'-phosphate serves as cofactor.

It is found in the cytoplasm. It carries out the reaction (8S)-8-amino-7-oxononanoate + S-adenosyl-L-methionine = S-adenosyl-4-methylsulfanyl-2-oxobutanoate + (7R,8S)-7,8-diammoniononanoate. It participates in cofactor biosynthesis; biotin biosynthesis; 7,8-diaminononanoate from 8-amino-7-oxononanoate (SAM route): step 1/1. Catalyzes the transfer of the alpha-amino group from S-adenosyl-L-methionine (SAM) to 7-keto-8-aminopelargonic acid (KAPA) to form 7,8-diaminopelargonic acid (DAPA). It is the only aminotransferase known to utilize SAM as an amino donor. In Methanocaldococcus jannaschii (strain ATCC 43067 / DSM 2661 / JAL-1 / JCM 10045 / NBRC 100440) (Methanococcus jannaschii), this protein is Adenosylmethionine-8-amino-7-oxononanoate aminotransferase.